Consider the following 200-residue polypeptide: Cytochrome c biogenesis ATP-binding export protein CcmA (200 aa).

Residues 3–199 form the ABC transporter domain; the sequence is LSGRRVICVR…DSRELRIGGV (197 aa). ATP is bound at residue 35–42; it reads GRNGSGKT.

Belongs to the ABC transporter superfamily. CcmA exporter (TC 3.A.1.107) family. As to quaternary structure, the complex is composed of two ATP-binding proteins (CcmA) and two transmembrane proteins (CcmB).

The protein localises to the cell inner membrane. It catalyses the reaction heme b(in) + ATP + H2O = heme b(out) + ADP + phosphate + H(+). Its function is as follows. Part of the ABC transporter complex CcmAB involved in the biogenesis of c-type cytochromes; once thought to export heme, this seems not to be the case, but its exact role is uncertain. Responsible for energy coupling to the transport system. The chain is Cytochrome c biogenesis ATP-binding export protein CcmA from Bradyrhizobium diazoefficiens (strain JCM 10833 / BCRC 13528 / IAM 13628 / NBRC 14792 / USDA 110).